The sequence spans 320 residues: Tyrosine phosphatase H3 (320 aa).

Residues 22–309 form the Tyrosine-protein phosphatase domain; it reads NFWEFVRLEH…AFCYKAVRYA (288 aa). Cys-250 functions as the Phosphocysteine intermediate in the catalytic mechanism.

Belongs to the protein-tyrosine phosphatase family.

It carries out the reaction O-phospho-L-tyrosyl-[protein] + H2O = L-tyrosyl-[protein] + phosphate. Its function is as follows. Suppresses host immune cell adhesion and phagocytosis. The protein is Tyrosine phosphatase H3 (H3) of Microplitis demolitor (Parasitoid wasp).